A 204-amino-acid chain; its full sequence is Urease accessory protein UreG 1 (204 aa).

Residue 14-21 (GPVGSGKT) participates in GTP binding.

The protein belongs to the SIMIBI class G3E GTPase family. UreG subfamily. Homodimer. UreD, UreF and UreG form a complex that acts as a GTP-hydrolysis-dependent molecular chaperone, activating the urease apoprotein by helping to assemble the nickel containing metallocenter of UreC. The UreE protein probably delivers the nickel.

It is found in the cytoplasm. In terms of biological role, facilitates the functional incorporation of the urease nickel metallocenter. This process requires GTP hydrolysis, probably effectuated by UreG. This chain is Urease accessory protein UreG 1, found in Methylorubrum extorquens (strain PA1) (Methylobacterium extorquens).